A 160-amino-acid polypeptide reads, in one-letter code: Cyanate hydratase (160 aa).

Catalysis depends on residues arginine 100, glutamate 103, and serine 126.

This sequence belongs to the cyanase family.

The enzyme catalyses cyanate + hydrogencarbonate + 3 H(+) = NH4(+) + 2 CO2. Its function is as follows. Catalyzes the reaction of cyanate with bicarbonate to produce ammonia and carbon dioxide. In Aspergillus flavus (strain ATCC 200026 / FGSC A1120 / IAM 13836 / NRRL 3357 / JCM 12722 / SRRC 167), this protein is Cyanate hydratase.